The primary structure comprises 165 residues: MSILINSTTIGDIIIVSGSVLLLFILIKTFAWKQITGIFEAREQKIANDIDTAEQARQQAEAFATKREEELSNAKTEANQIIDNAKETGLAKGDQIISEAKTEADRLKEKAHQDIAQNKAEALADVKGEVADLTVLLAEKIMVSNLDKEAQSNLIDSYIKKLGDA.

Residues 7 to 27 (STTIGDIIIVSGSVLLLFILI) form a helical membrane-spanning segment.

The protein belongs to the ATPase B chain family. F-type ATPases have 2 components, F(1) - the catalytic core - and F(0) - the membrane proton channel. F(1) has five subunits: alpha(3), beta(3), gamma(1), delta(1), epsilon(1). F(0) has three main subunits: a(1), b(2) and c(10-14). The alpha and beta chains form an alternating ring which encloses part of the gamma chain. F(1) is attached to F(0) by a central stalk formed by the gamma and epsilon chains, while a peripheral stalk is formed by the delta and b chains.

It localises to the cell membrane. F(1)F(0) ATP synthase produces ATP from ADP in the presence of a proton or sodium gradient. F-type ATPases consist of two structural domains, F(1) containing the extramembraneous catalytic core and F(0) containing the membrane proton channel, linked together by a central stalk and a peripheral stalk. During catalysis, ATP synthesis in the catalytic domain of F(1) is coupled via a rotary mechanism of the central stalk subunits to proton translocation. Functionally, component of the F(0) channel, it forms part of the peripheral stalk, linking F(1) to F(0). The protein is ATP synthase subunit b of Streptococcus agalactiae serotype Ia (strain ATCC 27591 / A909 / CDC SS700).